Reading from the N-terminus, the 644-residue chain is Transmembrane 9 superfamily member 9 (644 aa).

A signal peptide spans 1-27 (MEFYRSSRRLQILGSVILLLSIHVAHS). Residues 28 to 281 (FYLPGVAPQD…YLLMSDNQIH (254 aa)) lie on the Lumenal side of the membrane. The chain crosses the membrane as a helical span at residues 282 to 302 (WFSIVNSLMIVLFLSGMVAMI). Residues 303–351 (MLRTLYRDISRYNELETQEEAQEETGWKLVHGDVFRPPANSDLLCVYVG) are Cytoplasmic-facing. A helical membrane pass occupies residues 352–372 (TGVQCLGMVLVTMIFAMLGFL). Over 373–377 (SPSNR) the chain is Lumenal. A helical transmembrane segment spans residues 378-398 (GGLMTAMLLLWVFMGLFAGYA). Residues 399–418 (SSRLYKMFKGTEWKRIAFRT) lie on the Cytoplasmic side of the membrane. The chain crosses the membrane as a helical span at residues 419–439 (AFLFPAVVSAIFFVLNALIWG). The Lumenal portion of the chain corresponds to 440-451 (QKSSGAVPFGTM). The chain crosses the membrane as a helical span at residues 452 to 472 (FALIFLWFGISVPLVFVGAYL). At 473–501 (GFKKPPLDDPVKTNKIPRQIPEQAWYMNP) the chain is on the cytoplasmic side. A helical membrane pass occupies residues 502–522 (IFSILIGGILPFGAVFIELFF). The Lumenal portion of the chain corresponds to 523 to 534 (ILTSIWLNQFYY). The chain crosses the membrane as a helical span at residues 535–555 (IFGFLFLVFVILMVTCAEITI). Topologically, residues 556-573 (VLCYFQLCSEDYLWWWRS) are cytoplasmic. Residues 574–594 (YLTSGSSAVYLFLYAAFYFFT) form a helical membrane-spanning segment. Residues 595–600 (KLQITK) are Lumenal-facing. Residues 601 to 621 (LVSAMLYFGYMLIASYAFFVL) form a helical membrane-spanning segment. At 622-644 (TGTIGFYACLWFTRLIYSSVKID) the chain is on the cytoplasmic side. An Endoplasmic reticulum export signal motif is present at residues 633–638 (FTRLIY). The Golgi retention signal motif lies at 642–644 (KID).

It belongs to the nonaspanin (TM9SF) (TC 9.A.2) family.

It is found in the endosome membrane. The protein resides in the golgi apparatus membrane. This Arabidopsis thaliana (Mouse-ear cress) protein is Transmembrane 9 superfamily member 9.